A 420-amino-acid chain; its full sequence is Septin-8-A (420 aa).

Residues glutamine 39–glutamate 305 form the Septin-type G domain. The G1 motif stretch occupies residues glycine 49–serine 56. Residues glycine 49–serine 56, glycine 104, lysine 185–glutamate 193, glycine 239, and arginine 254 each bind GTP. The segment at aspartate 101 to glycine 104 is G3 motif. The G4 motif stretch occupies residues alanine 184 to aspartate 187. Residues glutamine 321 to serine 407 adopt a coiled-coil conformation. The tract at residues methionine 393–asparagine 420 is disordered.

The protein belongs to the TRAFAC class TrmE-Era-EngA-EngB-Septin-like GTPase superfamily. Septin GTPase family.

This Danio rerio (Zebrafish) protein is Septin-8-A (sept8a).